Reading from the N-terminus, the 261-residue chain is Ribonuclease PH (261 aa).

Residues R87 and 125-127 (GTR) contribute to the phosphate site.

The protein belongs to the RNase PH family. Homohexameric ring arranged as a trimer of dimers.

The enzyme catalyses tRNA(n+1) + phosphate = tRNA(n) + a ribonucleoside 5'-diphosphate. In terms of biological role, phosphorolytic 3'-5' exoribonuclease that plays an important role in tRNA 3'-end maturation. Removes nucleotide residues following the 3'-CCA terminus of tRNAs; can also add nucleotides to the ends of RNA molecules by using nucleoside diphosphates as substrates, but this may not be physiologically important. Probably plays a role in initiation of 16S rRNA degradation (leading to ribosome degradation) during starvation. The protein is Ribonuclease PH of Desulforudis audaxviator (strain MP104C).